An 87-amino-acid chain; its full sequence is Putative defensin-like protein 84 (87 aa).

The signal sequence occupies residues Met-1–Gly-27. 4 cysteine pairs are disulfide-bonded: Cys-32/Cys-73, Cys-36/Cys-54, Cys-42/Cys-71, and Cys-46/Cys-72.

The protein belongs to the DEFL family.

It is found in the secreted. The sequence is that of Putative defensin-like protein 84 from Arabidopsis thaliana (Mouse-ear cress).